The chain runs to 263 residues: Glucosamine-6-phosphate deaminase (263 aa).

Aspartate 72 serves as the catalytic Proton acceptor; for enolization step. Aspartate 141 (for ring-opening step) is an active-site residue. The active-site Proton acceptor; for ring-opening step is the histidine 143. Glutamate 148 functions as the For ring-opening step in the catalytic mechanism.

Belongs to the glucosamine/galactosamine-6-phosphate isomerase family. NagB subfamily.

The catalysed reaction is alpha-D-glucosamine 6-phosphate + H2O = beta-D-fructose 6-phosphate + NH4(+). It participates in amino-sugar metabolism; N-acetylneuraminate degradation; D-fructose 6-phosphate from N-acetylneuraminate: step 5/5. Its activity is regulated as follows. Allosterically activated by N-acetylglucosamine 6-phosphate (GlcNAc6P). Catalyzes the reversible isomerization-deamination of glucosamine 6-phosphate (GlcN6P) to form fructose 6-phosphate (Fru6P) and ammonium ion. In Porphyromonas gingivalis (strain ATCC 33277 / DSM 20709 / CIP 103683 / JCM 12257 / NCTC 11834 / 2561), this protein is Glucosamine-6-phosphate deaminase.